We begin with the raw amino-acid sequence, 359 residues long: S-adenosylmethionine:tRNA ribosyltransferase-isomerase (359 aa).

This sequence belongs to the QueA family. As to quaternary structure, monomer.

The protein resides in the cytoplasm. It catalyses the reaction 7-aminomethyl-7-carbaguanosine(34) in tRNA + S-adenosyl-L-methionine = epoxyqueuosine(34) in tRNA + adenine + L-methionine + 2 H(+). It participates in tRNA modification; tRNA-queuosine biosynthesis. Functionally, transfers and isomerizes the ribose moiety from AdoMet to the 7-aminomethyl group of 7-deazaguanine (preQ1-tRNA) to give epoxyqueuosine (oQ-tRNA). This Synechococcus sp. (strain ATCC 27144 / PCC 6301 / SAUG 1402/1) (Anacystis nidulans) protein is S-adenosylmethionine:tRNA ribosyltransferase-isomerase.